Reading from the N-terminus, the 307-residue chain is GTPase Era (307 aa).

In terms of domain architecture, Era-type G spans 17 to 186 (RCGFVAIVGR…LELIKPYLPE (170 aa)). Residues 25 to 32 (GRPNVGKS) are G1. Residue 25–32 (GRPNVGKS) participates in GTP binding. The interval 51-55 (QTTRN) is G2. A G3 region spans residues 72 to 75 (DTPG). GTP is bound by residues 72 to 76 (DTPGF) and 133 to 136 (NKID). A G4 region spans residues 133–136 (NKID). Residues 165–167 (VSA) form a G5 region. A KH type-2 domain is found at 217 to 293 (LGEELPYAMN…FLKVWVKVKS (77 aa)).

The protein belongs to the TRAFAC class TrmE-Era-EngA-EngB-Septin-like GTPase superfamily. Era GTPase family. Monomer.

The protein localises to the cytoplasm. The protein resides in the cell inner membrane. Functionally, an essential GTPase that binds both GDP and GTP, with rapid nucleotide exchange. Plays a role in 16S rRNA processing and 30S ribosomal subunit biogenesis and possibly also in cell cycle regulation and energy metabolism. In Neisseria meningitidis serogroup B (strain ATCC BAA-335 / MC58), this protein is GTPase Era.